We begin with the raw amino-acid sequence, 365 residues long: UPF0324 membrane protein Cj0999c (365 aa).

The next 11 membrane-spanning stretches (helical) occupy residues 12–34 (IVRS…MYLS), 44–63 (HLAA…PWFF), 83–100 (LGIV…LLSV), 105–127 (FLLS…TKIF), 134–153 (SMLV…LALE), 163–185 (GILA…PIAF), 197–219 (AMGV…AEMA), 234–256 (VIIK…YFFA), 269–288 (SITI…LNTY), 303–325 (IISL…LGLQ), and 338–360 (VFGL…TLAF).

The protein belongs to the UPF0324 family.

It is found in the cell membrane. This chain is UPF0324 membrane protein Cj0999c, found in Campylobacter jejuni subsp. jejuni serotype O:2 (strain ATCC 700819 / NCTC 11168).